We begin with the raw amino-acid sequence, 239 residues long: Uridylate kinase (239 aa).

13 to 16 (KLSG) contacts ATP. Residue Gly55 coordinates UMP. Gly56 and Arg60 together coordinate ATP. UMP is bound by residues Asp75 and 136 to 143 (TGNPFFTT). ATP is bound by residues Thr163, Asn164, Tyr169, and Asp172.

This sequence belongs to the UMP kinase family. As to quaternary structure, homohexamer.

Its subcellular location is the cytoplasm. The enzyme catalyses UMP + ATP = UDP + ADP. It participates in pyrimidine metabolism; CTP biosynthesis via de novo pathway; UDP from UMP (UMPK route): step 1/1. Inhibited by UTP. Functionally, catalyzes the reversible phosphorylation of UMP to UDP. The protein is Uridylate kinase of Neisseria meningitidis serogroup C / serotype 2a (strain ATCC 700532 / DSM 15464 / FAM18).